A 160-amino-acid chain; its full sequence is 2-C-methyl-D-erythritol 2,4-cyclodiphosphate synthase (160 aa).

Residues Asp9 and His11 each coordinate a divalent metal cation. 4-CDP-2-C-methyl-D-erythritol 2-phosphate is bound by residues 9–11 and 35–36; these read DVH and HS. Residue His43 coordinates a divalent metal cation. 4-CDP-2-C-methyl-D-erythritol 2-phosphate is bound by residues 57-59, 62-66, 101-107, 133-136, Phe140, and Arg143; these read DIG, FPDTD, AQKPKMA, and TTTE.

This sequence belongs to the IspF family. Homotrimer. The cofactor is a divalent metal cation.

It carries out the reaction 4-CDP-2-C-methyl-D-erythritol 2-phosphate = 2-C-methyl-D-erythritol 2,4-cyclic diphosphate + CMP. It participates in isoprenoid biosynthesis; isopentenyl diphosphate biosynthesis via DXP pathway; isopentenyl diphosphate from 1-deoxy-D-xylulose 5-phosphate: step 4/6. Its function is as follows. Involved in the biosynthesis of isopentenyl diphosphate (IPP) and dimethylallyl diphosphate (DMAPP), two major building blocks of isoprenoid compounds. Catalyzes the conversion of 4-diphosphocytidyl-2-C-methyl-D-erythritol 2-phosphate (CDP-ME2P) to 2-C-methyl-D-erythritol 2,4-cyclodiphosphate (ME-CPP) with a corresponding release of cytidine 5-monophosphate (CMP). This is 2-C-methyl-D-erythritol 2,4-cyclodiphosphate synthase from Geobacillus thermodenitrificans (strain NG80-2).